The chain runs to 289 residues: MELLCCEVDPVRRAVPDRNLLEDRVLQNLLTIEERYLPQCSYFKCVQKDIQPYMRRMVATWMLEVCEEQKCEEEVFPLAMNYLDRFLAGVPTPKTHLQLLGAVCMFLASKLKETIPLTAEKLCIYTDNSVKPQELLEWELVVLGKLKWNLAAVTPHDFIEHILRKLPQQKEKLSLIRKHAQTFIALCATDFKFAMYPPSMIATGSVGAAICGLQQDDEVNTLTCDALTELLAKITHTDVDCLKACQEQIEALLLNSLQQFRQEQHNAGSKSVEDPDQATTPTDVRDVDL.

A Cyclin N-terminal domain is found at 26–151 (LQNLLTIEER…VLGKLKWNLA (126 aa)). Residues 264 to 289 (QHNAGSKSVEDPDQATTPTDVRDVDL) are disordered. Ser-271 bears the Phosphoserine mark. At Thr-280 the chain carries Phosphothreonine.

It belongs to the cyclin family. Cyclin D subfamily. As to quaternary structure, interacts with either CDK4 or CDK6 protein kinase to form a serine/threonine kinase holoenzyme complex. The cyclin subunit imparts substrate specificity to the complex. Phosphorylation at Thr-280 by MAP kinases is required for ubiquitination and degradation by the DCX(AMBRA1) complex. Post-translationally, ubiquitinated by the DCX(AMBRA1) complex during the transition from G1 to S cell phase, leading to its degradation: ubiquitination is dependent on Thr-280 phosphorylation. The DCX(AMBRA1) complex represents the major regulator of CCND2 stability during the G1/S transition. Polyubiquitinated by the SCF(FBXL2) complex, leading to proteasomal degradation.

The protein resides in the nucleus. Its subcellular location is the cytoplasm. The protein localises to the nucleus membrane. In terms of biological role, regulatory component of the cyclin D2-CDK4 (DC) complex that phosphorylates and inhibits members of the retinoblastoma (RB) protein family including RB1 and regulates the cell-cycle during G(1)/S transition. Phosphorylation of RB1 allows dissociation of the transcription factor E2F from the RB/E2F complex and the subsequent transcription of E2F target genes which are responsible for the progression through the G(1) phase. Hypophosphorylates RB1 in early G(1) phase. Cyclin D-CDK4 complexes are major integrators of various mitogenenic and antimitogenic signals. The polypeptide is G1/S-specific cyclin-D2 (Mus musculus (Mouse)).